Reading from the N-terminus, the 240-residue chain is Ribonuclease 3 (240 aa).

The RNase III domain occupies 9 to 141 (VEELQKRLGV…LLAALYLDQG (133 aa)). Glutamate 54 serves as a coordination point for Mg(2+). The active site involves aspartate 58. Mg(2+) is bound by residues aspartate 127 and glutamate 130. Glutamate 130 is a catalytic residue. Positions 168-237 (DYKTALQEIV…ARKAYEKLVA (70 aa)) constitute a DRBM domain.

Belongs to the ribonuclease III family. Homodimer. Mg(2+) serves as cofactor.

Its subcellular location is the cytoplasm. The enzyme catalyses Endonucleolytic cleavage to 5'-phosphomonoester.. In terms of biological role, digests double-stranded RNA. Involved in the processing of primary rRNA transcript to yield the immediate precursors to the large and small rRNAs (23S and 16S). Processes some mRNAs, and tRNAs when they are encoded in the rRNA operon. Processes pre-crRNA and tracrRNA of type II CRISPR loci if present in the organism. In Thermotoga neapolitana (strain ATCC 49049 / DSM 4359 / NBRC 107923 / NS-E), this protein is Ribonuclease 3.